The following is a 250-amino-acid chain: Adenosylcobinamide-GDP ribazoletransferase (250 aa).

The next 6 helical transmembrane spans lie at 32–52, 59–79, 113–133, 136–156, 185–205, and 230–250; these read KGIIYFPVVGGIIGALLMVAY, LAHSLSALLTVGFFVFLTGGL, GVLAMVFILLLKLYGIQGLGE, IYWGIILMPVMGRQAIVYGCY, LTFILAAMHLPSLIFALLLPI, and CELTEGCYLLFILLITGAGLF.

Belongs to the CobS family. The cofactor is Mg(2+).

The protein localises to the cell membrane. It catalyses the reaction alpha-ribazole + adenosylcob(III)inamide-GDP = adenosylcob(III)alamin + GMP + H(+). It carries out the reaction alpha-ribazole 5'-phosphate + adenosylcob(III)inamide-GDP = adenosylcob(III)alamin 5'-phosphate + GMP + H(+). It functions in the pathway cofactor biosynthesis; adenosylcobalamin biosynthesis; adenosylcobalamin from cob(II)yrinate a,c-diamide: step 7/7. Functionally, joins adenosylcobinamide-GDP and alpha-ribazole to generate adenosylcobalamin (Ado-cobalamin). Also synthesizes adenosylcobalamin 5'-phosphate from adenosylcobinamide-GDP and alpha-ribazole 5'-phosphate. The sequence is that of Adenosylcobinamide-GDP ribazoletransferase from Alkaliphilus metalliredigens (strain QYMF).